A 549-amino-acid chain; its full sequence is CTP synthase (549 aa).

The segment at 1-270 is amidoligase domain; it reads MTKFVFVTGG…DRLICEELRL (270 aa). Serine 13 contributes to the CTP binding site. Serine 13 provides a ligand contact to UTP. ATP-binding positions include 14–19 and aspartate 71; that span reads SLGKGI. Residues aspartate 71 and glutamate 144 each contribute to the Mg(2+) site. CTP-binding positions include 151 to 153, 191 to 196, and lysine 227; these read DIE and KTKPTQ. UTP is bound by residues 191–196 and lysine 227; that span reads KTKPTQ. In terms of domain architecture, Glutamine amidotransferase type-1 spans 295-547; it reads TIGMVGKYVD…VEAALAAQRQ (253 aa). An L-glutamine-binding site is contributed by glycine 356. The active-site Nucleophile; for glutamine hydrolysis is cysteine 383. L-glutamine is bound by residues 384 to 387, glutamate 407, and arginine 473; that span reads LGMQ. Residues histidine 520 and glutamate 522 contribute to the active site.

This sequence belongs to the CTP synthase family. Homotetramer.

It carries out the reaction UTP + L-glutamine + ATP + H2O = CTP + L-glutamate + ADP + phosphate + 2 H(+). It catalyses the reaction L-glutamine + H2O = L-glutamate + NH4(+). The enzyme catalyses UTP + NH4(+) + ATP = CTP + ADP + phosphate + 2 H(+). It participates in pyrimidine metabolism; CTP biosynthesis via de novo pathway; CTP from UDP: step 2/2. With respect to regulation, allosterically activated by GTP, when glutamine is the substrate; GTP has no effect on the reaction when ammonia is the substrate. The allosteric effector GTP functions by stabilizing the protein conformation that binds the tetrahedral intermediate(s) formed during glutamine hydrolysis. Inhibited by the product CTP, via allosteric rather than competitive inhibition. In terms of biological role, catalyzes the ATP-dependent amination of UTP to CTP with either L-glutamine or ammonia as the source of nitrogen. Regulates intracellular CTP levels through interactions with the four ribonucleotide triphosphates. The protein is CTP synthase of Cupriavidus metallidurans (strain ATCC 43123 / DSM 2839 / NBRC 102507 / CH34) (Ralstonia metallidurans).